The primary structure comprises 577 residues: Proline--tRNA ligase (577 aa).

Belongs to the class-II aminoacyl-tRNA synthetase family. ProS type 1 subfamily. In terms of assembly, homodimer.

Its subcellular location is the cytoplasm. It catalyses the reaction tRNA(Pro) + L-proline + ATP = L-prolyl-tRNA(Pro) + AMP + diphosphate. Functionally, catalyzes the attachment of proline to tRNA(Pro) in a two-step reaction: proline is first activated by ATP to form Pro-AMP and then transferred to the acceptor end of tRNA(Pro). As ProRS can inadvertently accommodate and process non-cognate amino acids such as alanine and cysteine, to avoid such errors it has two additional distinct editing activities against alanine. One activity is designated as 'pretransfer' editing and involves the tRNA(Pro)-independent hydrolysis of activated Ala-AMP. The other activity is designated 'posttransfer' editing and involves deacylation of mischarged Ala-tRNA(Pro). The misacylated Cys-tRNA(Pro) is not edited by ProRS. In Herminiimonas arsenicoxydans, this protein is Proline--tRNA ligase.